Reading from the N-terminus, the 254-residue chain is Pyrroloquinoline-quinone synthase (254 aa).

Belongs to the PqqC family.

The catalysed reaction is 6-(2-amino-2-carboxyethyl)-7,8-dioxo-1,2,3,4,7,8-hexahydroquinoline-2,4-dicarboxylate + 3 O2 = pyrroloquinoline quinone + 2 H2O2 + 2 H2O + H(+). Its pathway is cofactor biosynthesis; pyrroloquinoline quinone biosynthesis. Ring cyclization and eight-electron oxidation of 3a-(2-amino-2-carboxyethyl)-4,5-dioxo-4,5,6,7,8,9-hexahydroquinoline-7,9-dicarboxylic-acid to PQQ. This is Pyrroloquinoline-quinone synthase from Rhodopseudomonas palustris (strain ATCC BAA-98 / CGA009).